The following is a 304-amino-acid chain: Protoheme IX farnesyltransferase (304 aa).

7 helical membrane-spanning segments follow: residues 24–44, 45–65, 107–127, 145–165, 172–192, 234–254, and 277–297; these read VMTL…GTIH, PVIA…AAAL, VFVM…FSIF, IVIG…AVTG, VLLF…LALF, WIGG…LVFV, and LFGY…GDRL.

This sequence belongs to the UbiA prenyltransferase family. Protoheme IX farnesyltransferase subfamily.

The protein localises to the cell inner membrane. It carries out the reaction heme b + (2E,6E)-farnesyl diphosphate + H2O = Fe(II)-heme o + diphosphate. It functions in the pathway porphyrin-containing compound metabolism; heme O biosynthesis; heme O from protoheme: step 1/1. Converts heme B (protoheme IX) to heme O by substitution of the vinyl group on carbon 2 of heme B porphyrin ring with a hydroxyethyl farnesyl side group. The polypeptide is Protoheme IX farnesyltransferase (Novosphingobium aromaticivorans (strain ATCC 700278 / DSM 12444 / CCUG 56034 / CIP 105152 / NBRC 16084 / F199)).